A 471-amino-acid chain; its full sequence is Collagenase 3 (471 aa).

A signal peptide spans 1 to 19 (MQPGVLAACLLLSWTHCWS). The propeptide at 20-103 (LPLLNSNEDD…PRCGVPDVGE (84 aa)) is activation peptide. A Cysteine switch motif is present at residues 94–101 (PRCGVPDV). Cysteine 96 contributes to the Zn(2+) binding site. The N-linked (GlcNAc...) asparagine glycan is linked to asparagine 117. A Ca(2+)-binding site is contributed by aspartate 128. 2 N-linked (GlcNAc...) asparagine glycosylation sites follow: asparagine 152 and asparagine 158. Aspartate 162 contributes to the Ca(2+) binding site. Histidine 172 and aspartate 174 together coordinate Zn(2+). Residues 176–246 (YPFDGPSGLL…GALMFPIYTY (71 aa)) form an interaction with TIMP2 region. Positions 179, 180, 182, and 184 each coordinate Ca(2+). Histidine 187 serves as a coordination point for Zn(2+). Residues asparagine 194, glycine 196, and aspartate 198 each contribute to the Ca(2+) site. Histidine 200 provides a ligand contact to Zn(2+). Ca(2+) contacts are provided by aspartate 202, aspartate 203, and glutamate 205. Residue histidine 222 participates in Zn(2+) binding. Glutamate 223 is an active-site residue. Positions 226, 232, and 240 each coordinate Zn(2+). Positions 263–284 (QSLYGPGDEDPNPKHPKTPDKC) are disordered. The interaction with collagen stretch occupies residues 268–471 (PGDEDPNPKH…VMPTNSLLWC (204 aa)). Residues 273 to 284 (PNPKHPKTPDKC) show a composition bias toward basic and acidic residues. 4 Hemopexin repeats span residues 281-330 (PDKC…WPEL), 331-377 (PNRI…GFPR), 379-427 (VKKI…FPGI), and 428-471 (GGKV…LLWC). Cysteines 284 and 471 form a disulfide. Ca(2+)-binding residues include aspartate 291, isoleucine 293, aspartate 335, and alanine 337. A Phosphotyrosine; by PKDCC modification is found at tyrosine 366. 2 residues coordinate Ca(2+): serine 383 and alanine 385. N-linked (GlcNAc...) asparagine glycosylation is present at asparagine 409. Residues aspartate 432 and valine 434 each coordinate Ca(2+).

This sequence belongs to the peptidase M10A family. Ca(2+) serves as cofactor. It depends on Zn(2+) as a cofactor. Post-translationally, the proenzyme is activated by removal of the propeptide; this cleavage can be effected by other matrix metalloproteinases, such as MMP2, MMP3 and MMP14 and may involve several cleavage steps. Cleavage can also be autocatalytic, after partial maturation by another protease or after treatment with 4-aminophenylmercuric acetate (APMA) (in vitro). In terms of processing, N-glycosylated. Tyrosine phosphorylated by PKDCC/VLK.

It localises to the secreted. The protein localises to the extracellular space. The protein resides in the extracellular matrix. Plays a role in the degradation of extracellular matrix proteins including fibrillar collagen, fibronectin, TNC and ACAN. Cleaves triple helical collagens, including type I, type II and type III collagen, but has the highest activity with soluble type II collagen. Can also degrade collagen type IV, type XIV and type X. May also function by activating or degrading key regulatory proteins, such as TGFB1 and CCN2. Plays a role in wound healing, tissue remodeling, cartilage degradation, bone development, bone mineralization and ossification. Required for normal embryonic bone development and ossification. Plays a role in the healing of bone fractures via endochondral ossification. Plays a role in wound healing, probably by a mechanism that involves proteolytic activation of TGFB1 and degradation of CCN2. Plays a role in keratinocyte migration during wound healing. May play a role in cell migration and in tumor cell invasion. The protein is Collagenase 3 (MMP13) of Oryctolagus cuniculus (Rabbit).